The primary structure comprises 638 residues: 1-deoxy-D-xylulose-5-phosphate synthase (638 aa).

Thiamine diphosphate contacts are provided by residues H79 and 120 to 122 (GHS). A Mg(2+)-binding site is contributed by D151. Thiamine diphosphate is bound by residues 152–153 (GA), N182, Y291, and E373. N182 is a Mg(2+) binding site.

Belongs to the transketolase family. DXPS subfamily. In terms of assembly, homodimer. The cofactor is Mg(2+). Thiamine diphosphate is required as a cofactor.

The enzyme catalyses D-glyceraldehyde 3-phosphate + pyruvate + H(+) = 1-deoxy-D-xylulose 5-phosphate + CO2. It functions in the pathway metabolic intermediate biosynthesis; 1-deoxy-D-xylulose 5-phosphate biosynthesis; 1-deoxy-D-xylulose 5-phosphate from D-glyceraldehyde 3-phosphate and pyruvate: step 1/1. Its function is as follows. Catalyzes the acyloin condensation reaction between C atoms 2 and 3 of pyruvate and glyceraldehyde 3-phosphate to yield 1-deoxy-D-xylulose-5-phosphate (DXP). The polypeptide is 1-deoxy-D-xylulose-5-phosphate synthase (Xanthomonas oryzae pv. oryzae (strain MAFF 311018)).